Here is a 345-residue protein sequence, read N- to C-terminus: MSNMMKALVKSKAEVGLWMEDVPVPEVGPNDVLIRVKKSAICGTDVHIWNWDQWAQKTIPVPMVVGHEFSGEIAEIGSAVTRYHVGERVSGEGHIVCGKCRNCRAGRGHLCRNTLGVGVNRPGSFGEFVCIPESNVVPIPDDISDEIAAIFDPFGNAVHTALSFDLVGEDVLVTGAGPIGIMGALVAKRSGARKVVITDINPHRLDLARKLGIDHVVDASKENLADVMKAIGMTEGFDVGLEMSGAAPAFRDMIDKMNNGGKIAILGIAPAGFEIDWNKVIFKMLNLKGIYGREMFETWYKMIAFVQGGLDLSPIITHRIKIDDFRDGFEAMRSGNSGKVVMDWM.

C42 provides a ligand contact to Zn(2+). Active-site charge relay system residues include T44 and H47. Zn(2+) is bound by residues H67, E68, C97, C100, C103, and C111. NAD(+) contacts are provided by residues I179, D199, R204, 266–268 (LGI), and 290–291 (IY).

Belongs to the zinc-containing alcohol dehydrogenase family. Homotetramer. The cofactor is Zn(2+).

It is found in the cytoplasm. The enzyme catalyses L-threonine + NAD(+) = (2S)-2-amino-3-oxobutanoate + NADH + H(+). The protein operates within amino-acid degradation; L-threonine degradation via oxydo-reductase pathway; glycine from L-threonine: step 1/2. Catalyzes the NAD(+)-dependent oxidation of L-threonine to 2-amino-3-ketobutyrate. The polypeptide is L-threonine 3-dehydrogenase (Rhizobium etli (strain CIAT 652)).